A 365-amino-acid polypeptide reads, in one-letter code: Endophilin-B1 (365 aa).

Met-1 carries the post-translational modification N-acetylmethionine. Residues 1–30 (MNIMDFNVKKLAADAGTFLSRAVQFTEEKL) are membrane-binding amphipathic helix. The tract at residues 1-37 (MNIMDFNVKKLAADAGTFLSRAVQFTEEKLGQAEKTE) is required for membrane binding. A BAR domain is found at 27 to 261 (EEKLGQAEKT…LGSFPSNYLS (235 aa)). Thr-145 bears the Phosphothreonine; by CDK5 mark. Positions 155 to 186 (YKTIAKERKLLQNKRLDLDAAKTRLKKAKAAE) form a coiled coil. The region spanning 305–365 (SNNRKARVLY…VPITYLELLN (61 aa)) is the SH3 domain.

Belongs to the endophilin family. Homodimer, and heterodimer with SH3GLB2. Binds BAX; induction of apoptosis augments BAX binding. Binds DNM1, HTT, AMPH, BIN1 and ARFGAP1. Interacts with UVRAG; UVRAG bridges the interaction to BECN1 indicative for an association with the PI3K complex II (PI3KC3-C2). Isoform 3 interacts with PPP1CC; this interaction leads to the inhibition of phosphatase activity. Post-translationally, phosphorylated at Thr-145 by CDK5; this phosphorylation is required for autophagy induction in starved neurons and facilitates homodimerization. Isoform 1 is widely expressed. Isoform 2 is brain-specific. Isoform 3 is predominantly expressed in testis, but it is also detected in liver and, at much lower levels, in skin, stomach and ovary.

The protein localises to the cytoplasm. It localises to the golgi apparatus membrane. The protein resides in the mitochondrion outer membrane. It is found in the cytoplasmic vesicle. Its subcellular location is the autophagosome membrane. The protein localises to the midbody. Functionally, may be required for normal outer mitochondrial membrane dynamics. Required for coatomer-mediated retrograde transport in certain cells. May recruit other proteins to membranes with high curvature. May promote membrane fusion. Involved in activation of caspase-dependent apoptosis by promoting BAX/BAK1 activation. Isoform 1 acts proapoptotic in fibroblasts. Involved in caspase-independent apoptosis during nutrition starvation and involved in the regulation of autophagy. Activates lipid kinase activity of PIK3C3 during autophagy probably by associating with the PI3K complex II (PI3KC3-C2). Associated with PI3KC3-C2 during autophagy may regulate the trafficking of ATG9A from the Golgi complex to the peripheral cytoplasm for the formation of autophagosomes by inducing Golgi membrane tubulation and fragmentation. Involved in regulation of degradative endocytic trafficking and cytokinesis, probably in the context of PI3KC3-C2. Isoform 2 acts antiapoptotic in neuronal cells; involved in maintenance of mitochondrial morphology and promotes neuronal viability. This is Endophilin-B1 (Sh3glb1) from Mus musculus (Mouse).